A 459-amino-acid polypeptide reads, in one-letter code: tRNA modification GTPase MnmE (459 aa).

Arg23, Glu88, and Arg127 together coordinate (6S)-5-formyl-5,6,7,8-tetrahydrofolate. The 159-residue stretch at 223–381 folds into the TrmE-type G domain; it reads GLSVVIVGKP…IKNCIKELFF (159 aa). Asn233 is a binding site for K(+). Residues 233 to 238, 252 to 258, and 277 to 280 contribute to the GTP site; these read NVGKSS, TDIPGTT, and DTAG. Ser237 is a Mg(2+) binding site. 3 residues coordinate K(+): Thr252, Ile254, and Thr257. Thr258 provides a ligand contact to Mg(2+). Residue Lys459 participates in (6S)-5-formyl-5,6,7,8-tetrahydrofolate binding.

Belongs to the TRAFAC class TrmE-Era-EngA-EngB-Septin-like GTPase superfamily. TrmE GTPase family. In terms of assembly, homodimer. Heterotetramer of two MnmE and two MnmG subunits. The cofactor is K(+).

It is found in the cytoplasm. Exhibits a very high intrinsic GTPase hydrolysis rate. Involved in the addition of a carboxymethylaminomethyl (cmnm) group at the wobble position (U34) of certain tRNAs, forming tRNA-cmnm(5)s(2)U34. The protein is tRNA modification GTPase MnmE of Clostridium kluyveri (strain ATCC 8527 / DSM 555 / NBRC 12016 / NCIMB 10680 / K1).